A 235-amino-acid polypeptide reads, in one-letter code: Sugar fermentation stimulation protein homolog (235 aa).

This sequence belongs to the SfsA family.

This Maricaulis maris (strain MCS10) (Caulobacter maris) protein is Sugar fermentation stimulation protein homolog.